The sequence spans 409 residues: Peptidase T (409 aa).

His-79 provides a ligand contact to Zn(2+). Asp-81 is an active-site residue. Residue Asp-140 coordinates Zn(2+). Glu-174 serves as the catalytic Proton acceptor. Residues Glu-175, Asp-197, and His-379 each coordinate Zn(2+).

Belongs to the peptidase M20B family. Zn(2+) is required as a cofactor.

The protein resides in the cytoplasm. The catalysed reaction is Release of the N-terminal residue from a tripeptide.. In terms of biological role, cleaves the N-terminal amino acid of tripeptides. The sequence is that of Peptidase T from Lysinibacillus sphaericus (strain C3-41).